The sequence spans 310 residues: Protein LRATD2 (310 aa).

The segment at 1–76 (MGNQVEKLTH…PPPQPQPYDP (76 aa)) is disordered. Positions 54–64 (PDGGGLPDGGD) are enriched in gly residues. Pro residues predominate over residues 65-74 (GPPPPQPQPY). The 96-residue stretch at 122–217 (VEFVSQAQYP…CRYGKREFKI (96 aa)) folds into the LRAT domain. The interval 274-310 (HPAEPEEGDSNVARTTPPPGRPPAPSSEEEDGEAVAH) is disordered. The span at 289-298 (TPPPGRPPAP) shows a compositional bias: pro residues. Over residues 300–310 (SEEEDGEAVAH) the composition is skewed to acidic residues.

Belongs to the LRATD family. As to expression, expressed in esophageal squamous cell carcinomas.

In Homo sapiens (Human), this protein is Protein LRATD2.